Reading from the N-terminus, the 1767-residue chain is Endo-alpha-N-acetylgalactosaminidase (1767 aa).

The first 39 residues, 1–39 (MNKGLFEKRCKYSIRKFSLGVASVMIGATFFGTSPVLAD), serve as a signal peptide directing secretion. Basic and acidic residues-rich tracts occupy residues 63–75 (NDGH…KVGE) and 84–111 (DGPK…DKPA). Disordered stretches follow at residues 63 to 137 (NDGH…QGTV) and 301 to 324 (VKTD…GPEV). The segment covering 112-124 (AAKPETPKTVTPE) has biased composition (low complexity). 2 stretches are compositionally biased toward basic and acidic residues: residues 127–137 (TVEKKEQQGTV) and 304–324 (DNQE…GPEV). Ca(2+) contacts are provided by aspartate 577, asparagine 579, aspartate 581, lysine 583, and aspartate 588. Residues 602–893 (GWKKVKDITA…DVMTKYFQHF (292 aa)) are catalytic. Aspartate 658 lines the substrate pocket. Aspartate 764 (nucleophile) is an active-site residue. The Proton donor/acceptor role is filled by glutamate 796. Ca(2+) is bound by residues aspartate 1233, glutamate 1235, glutamate 1281, tryptophan 1284, and aspartate 1411. The LPXTG sorting signal motif lies at 1735–1739 (LPATG). Threonine 1738 carries the post-translational modification Pentaglycyl murein peptidoglycan amidated threonine. A propeptide spans 1739–1767 (GESQFDTALFLASVSLALSALFVVKTKKD) (removed by sortase).

Belongs to the glycosyl hydrolase 101 family. A subfamily.

It localises to the secreted. It is found in the cell wall. The catalysed reaction is a 3-O-[beta-D-galactosyl-(1-&gt;3)-N-acetyl-alpha-D-galactosaminyl]-L-threonyl-[protein] + H2O = beta-D-galactosyl-(1-&gt;3)-N-acetyl-D-galactosamine + L-threonyl-[protein]. It catalyses the reaction a 3-O-[beta-D-galactosyl-(1-&gt;3)-N-acetyl-alpha-D-galactosaminyl]-L-seryl-[protein] + H2O = beta-D-galactosyl-(1-&gt;3)-N-acetyl-D-galactosamine + L-seryl-[protein]. Functionally, involved in the breakdown of mucin-type O-linked glycans. Specifically removes the T-antigen disaccharide (Gal-beta-1,3-GalNAc-alpha) from extracellular host glycoproteins. Representative of a broadly important class of virulence factors. The sequence is that of Endo-alpha-N-acetylgalactosaminidase from Streptococcus pneumoniae (strain ATCC BAA-255 / R6).